Consider the following 269-residue polypeptide: HTH-type transcriptional activator ArnR1 (269 aa).

Residues 1-217 (MSSMNKRVFD…LLKLTGSYRY (217 aa)) are Cytoplasmic-facing. Positions 42–65 (TTEISQTINTSRKSIIDAIRKLVD) form a DNA-binding region, H-T-H motif. A helical membrane pass occupies residues 218 to 238 (EIALTKVMLFNVISIPVLMYL). Over 239 to 241 (KDQ) the chain is Extracellular. Residues 242 to 262 (LGILEAIWLYVIILLPLLSIF) traverse the membrane as a helical segment. Topologically, residues 263–269 (AEIFNRI) are cytoplasmic.

It is found in the cell membrane. Functionally, involved in regulation of archaellar gene expression. May activate flaB transcription upon nutrient starvation by acting on the flaB promoter. This is HTH-type transcriptional activator ArnR1 from Sulfolobus acidocaldarius (strain ATCC 33909 / DSM 639 / JCM 8929 / NBRC 15157 / NCIMB 11770).